Consider the following 382-residue polypeptide: tRNA (guanine(26)-N(2))-dimethyltransferase (382 aa).

The Trm1 methyltransferase domain occupies 4-370 (TEVIEGKARL…REFSEILECV (367 aa)). R44, R69, D87, D113, and A114 together coordinate S-adenosyl-L-methionine. The Zn(2+) site is built by C244, C247, C261, and C264.

Belongs to the class I-like SAM-binding methyltransferase superfamily. Trm1 family.

The catalysed reaction is guanosine(26) in tRNA + 2 S-adenosyl-L-methionine = N(2)-dimethylguanosine(26) in tRNA + 2 S-adenosyl-L-homocysteine + 2 H(+). Its function is as follows. Dimethylates a single guanine residue at position 26 of a number of tRNAs using S-adenosyl-L-methionine as donor of the methyl groups. This is tRNA (guanine(26)-N(2))-dimethyltransferase from Metallosphaera sedula (strain ATCC 51363 / DSM 5348 / JCM 9185 / NBRC 15509 / TH2).